Here is a 585-residue protein sequence, read N- to C-terminus: uncharacterized protein (585 aa).

Positions 1–34 are disordered; it reads MNAYVRDSESVYSESYPPENFISNEPEKSKDKDN. Residues 1–89 are Cytoplasmic-facing; sequence MNAYVRDSES…KRRLKSRHIQ (89 aa). The segment covering 10 to 19 has biased composition (low complexity); sequence SVYSESYPPE. The segment covering 25–34 has biased composition (basic and acidic residues); the sequence is EPEKSKDKDN. A helical membrane pass occupies residues 90-110; that stretch reads MIGIGGAIGTGVWVGSSKSLY. The Extracellular portion of the chain corresponds to 111–121; the sequence is RGGAASVLIDY. The helical transmembrane segment at 122-142 threads the bilayer; that stretch reads CIVGTMVFCTVYALGELAVAF. Over 143 to 159 the chain is Cytoplasmic; it reads PTRGSFVTHATRFIDES. Residues 160 to 180 form a helical membrane-spanning segment; it reads WGFALSWNYVFSFIVTIPLEL. Over 181–193 the chain is Extracellular; it reads TTGTMMIKYWTNL. The chain crosses the membrane as a helical span at residues 194 to 214; sequence NSGIWVTVFIVFLFFINIFGV. Residues 215-221 lie on the Cytoplasmic side of the membrane; it reads KGYGEME. The chain crosses the membrane as a helical span at residues 222 to 242; sequence FIMSTIKVVAMCGFIILGIII. Residues 243 to 271 lie on the Extracellular side of the membrane; it reads DCGGVPTDHRGYMGTHIFRENAFRHKFKG. A helical membrane pass occupies residues 272 to 292; the sequence is FCAVFTSAAFSFSGTEYVGVA. Residues 293–313 lie on the Cytoplasmic side of the membrane; sequence AAETENPAKAFPVAVRQTLFR. The chain crosses the membrane as a helical span at residues 314–334; the sequence is IAIFYILSLFIVSLLISGADP. The Extracellular segment spans residues 335-361; the sequence is RLTSYHGVDASPFVLAIKDANIKALPS. Residues 362–382 form a helical membrane-spanning segment; that stretch reads ILNAIILISVISSANAQLYAG. Topologically, residues 383–407 are cytoplasmic; the sequence is SRAIHSLGCNGFAPKCFTLVDREGR. Residues 408-428 form a helical membrane-spanning segment; that stretch reads PLVALLILFLFMFLGYLVETG. Residues 429–436 are Extracellular-facing; sequence QYDTVFDW. Residues 437-457 traverse the membrane as a helical segment; that stretch reads MLSISGLGTLFCWGSICLAHI. Over 458–486 the chain is Cytoplasmic; sequence RYRAAMKHQNRSLKEVGFVSPFNVYASYY. A helical transmembrane segment spans residues 487-507; it reads AFILVCLVLAAEFYVSIFPVG. At 508–511 the chain is on the extracellular side; it reads GKPD. The chain crosses the membrane as a helical span at residues 512 to 532; that stretch reads ASAFFENYLSAPVILVFFICH. Residues 533–585 lie on the Cytoplasmic side of the membrane; that stretch reads KLYYKTKRITLSNMDLETDFAYKTPVEEEEEEEKSAGSLSIKQRMKKLSDMMC.

Belongs to the amino acid-polyamine-organocation (APC) superfamily.

The protein localises to the endoplasmic reticulum. The protein resides in the membrane. This is an uncharacterized protein from Schizosaccharomyces pombe (strain 972 / ATCC 24843) (Fission yeast).